A 446-amino-acid polypeptide reads, in one-letter code: Zinc finger protein BALDIBIS (446 aa).

Residues 20–53 (EHIAPNPNPNPNPTSSNSAKRKRNLPGNPDPDAE) form a disordered region. Ser-58 is subject to Phosphoserine. C2H2-type zinc fingers lie at residues 68 to 90 (FICEVCNKGFKRDQNLQLHRRGH) and 110 to 140 (YICPEKTCVHHDPARALGDLTGIKKHFSRKH). A Nuclear localization signal motif is present at residues 132 to 139 (IKKHFSRK). The C2H2-type 2; degenerate zinc finger occupies 145–168 (WKCDKCSKKYAVMSDWKAHSKICG). Cys-147, Cys-150, His-163, Cys-167, Cys-174, Cys-176, His-189, and Cys-193 together coordinate Zn(2+). The CCHC-type 2; atypical zinc finger occupies 172-195 (YRCDCGTLFSRKDSFITHRAFCDA). The interval 182-194 (RKDSFITHRAFCD) is SHR-binding. The tract at residues 425 to 446 (HNLPDSSPPASTDGTPTADMNQ) is disordered. The span at 427–446 (LPDSSPPASTDGTPTADMNQ) shows a compositional bias: polar residues.

Binds to RGA and SCL3 competitively in the nucleus. Expressed in roots, especially in vascular initials, cortex, endodermis, and quiescent center (QC).

It localises to the nucleus. Functionally, transcription factor that, together with JKD, regulates tissue boundaries and asymmetric cell division in roots by a rapid up-regulation of 'SCARECROW' (SCR), thus controlling the nuclear localization of 'SHORT-ROOT' (SHR) and restricting its action. Confines CYCD6 expression to the cortex-endodermis initial/daughter (CEI/CEID) tissues. Binds DNA via its zinc fingers. Recognizes and binds to SCL3 promoter sequence 5'-AGACAA-3' to promote its expression when in complex with RGA. This Arabidopsis thaliana (Mouse-ear cress) protein is Zinc finger protein BALDIBIS.